The chain runs to 361 residues: Phospho-N-acetylmuramoyl-pentapeptide-transferase (361 aa).

10 helical membrane passes run 25 to 45 (TGGA…WIIN), 72 to 92 (TPTM…VLWA), 95 to 115 (VNPY…VGFY), 133 to 153 (TRLL…VWLG), 169 to 189 (VVLN…VGAG), 200 to 220 (GLAI…AYLA), 240 to 260 (LAVL…FNAP), 264 to 284 (IFMG…IAVA), 289 to 309 (IVLA…IVQV), and 338 to 358 (QIVI…LATL).

The protein belongs to the glycosyltransferase 4 family. MraY subfamily. It depends on Mg(2+) as a cofactor.

Its subcellular location is the cell inner membrane. The enzyme catalyses UDP-N-acetyl-alpha-D-muramoyl-L-alanyl-gamma-D-glutamyl-meso-2,6-diaminopimeloyl-D-alanyl-D-alanine + di-trans,octa-cis-undecaprenyl phosphate = di-trans,octa-cis-undecaprenyl diphospho-N-acetyl-alpha-D-muramoyl-L-alanyl-D-glutamyl-meso-2,6-diaminopimeloyl-D-alanyl-D-alanine + UMP. Its pathway is cell wall biogenesis; peptidoglycan biosynthesis. Catalyzes the initial step of the lipid cycle reactions in the biosynthesis of the cell wall peptidoglycan: transfers peptidoglycan precursor phospho-MurNAc-pentapeptide from UDP-MurNAc-pentapeptide onto the lipid carrier undecaprenyl phosphate, yielding undecaprenyl-pyrophosphoryl-MurNAc-pentapeptide, known as lipid I. In Rhodopseudomonas palustris (strain BisB5), this protein is Phospho-N-acetylmuramoyl-pentapeptide-transferase.